The primary structure comprises 217 residues: Pyridoxine/pyridoxamine 5'-phosphate oxidase (217 aa).

Residues 13–16 (RREY) and lysine 71 each bind substrate. FMN is bound by residues 66–71 (RIVLLK), 81–82 (YT), arginine 87, lysine 88, and glutamine 110. Residues tyrosine 128, arginine 132, and serine 136 each coordinate substrate. Residues 145 to 146 (QS) and tryptophan 190 contribute to the FMN site. Residue 196–198 (RLH) participates in substrate binding. Arginine 200 lines the FMN pocket.

The protein belongs to the pyridoxamine 5'-phosphate oxidase family. Homodimer. FMN is required as a cofactor.

The enzyme catalyses pyridoxamine 5'-phosphate + O2 + H2O = pyridoxal 5'-phosphate + H2O2 + NH4(+). The catalysed reaction is pyridoxine 5'-phosphate + O2 = pyridoxal 5'-phosphate + H2O2. The protein operates within cofactor metabolism; pyridoxal 5'-phosphate salvage; pyridoxal 5'-phosphate from pyridoxamine 5'-phosphate: step 1/1. It participates in cofactor metabolism; pyridoxal 5'-phosphate salvage; pyridoxal 5'-phosphate from pyridoxine 5'-phosphate: step 1/1. Catalyzes the oxidation of either pyridoxine 5'-phosphate (PNP) or pyridoxamine 5'-phosphate (PMP) into pyridoxal 5'-phosphate (PLP). The sequence is that of Pyridoxine/pyridoxamine 5'-phosphate oxidase from Serratia proteamaculans (strain 568).